Reading from the N-terminus, the 255-residue chain is Methylthioribulose-1-phosphate dehydratase (255 aa).

Cys98 is a substrate binding site. Residues His116 and His118 each contribute to the Zn(2+) site. Catalysis depends on Glu150, which acts as the Proton donor/acceptor. His207 lines the Zn(2+) pocket.

It belongs to the aldolase class II family. MtnB subfamily. It depends on Zn(2+) as a cofactor.

The protein resides in the cytoplasm. It carries out the reaction 5-(methylsulfanyl)-D-ribulose 1-phosphate = 5-methylsulfanyl-2,3-dioxopentyl phosphate + H2O. Its pathway is amino-acid biosynthesis; L-methionine biosynthesis via salvage pathway; L-methionine from S-methyl-5-thio-alpha-D-ribose 1-phosphate: step 2/6. Its function is as follows. Catalyzes the dehydration of methylthioribulose-1-phosphate (MTRu-1-P) into 2,3-diketo-5-methylthiopentyl-1-phosphate (DK-MTP-1-P). In Pyricularia oryzae (strain 70-15 / ATCC MYA-4617 / FGSC 8958) (Rice blast fungus), this protein is Methylthioribulose-1-phosphate dehydratase.